The following is a 136-amino-acid chain: Histone H3, embryonic (136 aa).

Residues 1 to 43 (MARTKQTARKSTGGKAPRKQLATKAARKSAPATGGVKKPHRYR) are disordered. The residue at position 5 (K5) is an N6-methylated lysine. Residue K10 is modified to N6-acetyllysine; alternate. Position 10 is an N6-methylated lysine; alternate (K10). Phosphoserine is present on S11. Residues K15 and K24 each carry the N6-acetyllysine modification. 3 positions are modified to N6-methylated lysine: K28, K37, and K80.

Belongs to the histone H3 family. The nucleosome is a histone octamer containing two molecules each of H2A, H2B, H3 and H4 assembled in one H3-H4 heterotetramer and two H2A-H2B heterodimers. The octamer wraps approximately 147 bp of DNA. In terms of processing, acetylation is generally linked to gene activation. Methylation at Lys-5 is linked to gene activation. Methylation at Lys-10 is linked to gene repression.

Its subcellular location is the nucleus. It is found in the chromosome. Its function is as follows. Core component of nucleosome. Nucleosomes wrap and compact DNA into chromatin, limiting DNA accessibility to the cellular machineries which require DNA as a template. Histones thereby play a central role in transcription regulation, DNA repair, DNA replication and chromosomal stability. DNA accessibility is regulated via a complex set of post-translational modifications of histones, also called histone code, and nucleosome remodeling. This chain is Histone H3, embryonic, found in Paracentrotus lividus (Common sea urchin).